The chain runs to 121 residues: Small ribosomal subunit protein bS6 (121 aa).

The protein belongs to the bacterial ribosomal protein bS6 family.

Functionally, binds together with bS18 to 16S ribosomal RNA. The protein is Small ribosomal subunit protein bS6 of Pelagibacter ubique (strain HTCC1062).